A 282-amino-acid polypeptide reads, in one-letter code: DNA-dependent metalloprotease WSS1 homolog 2 (282 aa).

A Ubiquitin-like domain is found at 1-75; sequence MELKFSCRGN…CLIRQDKDIV (75 aa). Residues 99–274 form the WLM domain; it reads PHTTPKPASI…LLAAAERRKQ (176 aa). Zn(2+) is bound at residue His-202. The active site involves Glu-203. The Zn(2+) site is built by His-206 and His-212. Positions 234–282 are disordered; that stretch reads GKPGSYVSDRASYTPQQDNDDEDQKNHRRDLLLAAAERRKQSGSKVQKE. Basic and acidic residues predominate over residues 269–282; that stretch reads AERRKQSGSKVQKE.

Belongs to the peptidase M3 family. WSS1-like metalloprotease (WLM) subfamily. Zn(2+) serves as cofactor.

The protein localises to the cytoplasm. Its subcellular location is the nucleus. Functionally, metalloendopeptidase that acts selectively on DNA-binding proteins. DNA is needed to bring the protease and substrates together to enable proteolysis. Involved in the repair of toxic DNA-protein cross-links (DPCs) such as covalently trapped topoisomerase 1 (TOP1) adducts on DNA lesions or DPCs induced by reactive compounds such as formaldehyde. This Schizosaccharomyces pombe (strain 972 / ATCC 24843) (Fission yeast) protein is DNA-dependent metalloprotease WSS1 homolog 2.